A 319-amino-acid polypeptide reads, in one-letter code: Ferrochelatase (319 aa).

Fe cation is bound by residues histidine 194 and glutamate 275.

The protein belongs to the ferrochelatase family.

Its subcellular location is the cytoplasm. The catalysed reaction is heme b + 2 H(+) = protoporphyrin IX + Fe(2+). The protein operates within porphyrin-containing compound metabolism; protoheme biosynthesis; protoheme from protoporphyrin-IX: step 1/1. Catalyzes the ferrous insertion into protoporphyrin IX. The sequence is that of Ferrochelatase from Vibrio vulnificus (strain YJ016).